The following is a 360-amino-acid chain: S-adenosylmethionine decarboxylase proenzyme (360 aa).

Residues Glu-13 and Glu-16 contribute to the active site. Ser-73 functions as the Schiff-base intermediate with substrate; via pyruvic acid in the catalytic mechanism. Ser-73 carries the post-translational modification Pyruvic acid (Ser); by autocatalysis. The Proton donor; for catalytic activity role is filled by Cys-87. Active-site proton acceptor; for processing activity residues include Ser-236 and His-249.

It belongs to the eukaryotic AdoMetDC family. Pyruvate is required as a cofactor. Post-translationally, is synthesized initially as an inactive proenzyme. Formation of the active enzyme involves a self-maturation process in which the active site pyruvoyl group is generated from an internal serine residue via an autocatalytic post-translational modification. Two non-identical subunits are generated from the proenzyme in this reaction, and the pyruvate is formed at the N-terminus of the alpha chain, which is derived from the carboxyl end of the proenzyme. The post-translation cleavage follows an unusual pathway, termed non-hydrolytic serinolysis, in which the side chain hydroxyl group of the serine supplies its oxygen atom to form the C-terminus of the beta chain, while the remainder of the serine residue undergoes an oxidative deamination to produce ammonia and the pyruvoyl group blocking the N-terminus of the alpha chain. In terms of tissue distribution, stolon, also expressed in leaves, stems and roots.

The catalysed reaction is S-adenosyl-L-methionine + H(+) = S-adenosyl 3-(methylsulfanyl)propylamine + CO2. It participates in amine and polyamine biosynthesis; S-adenosylmethioninamine biosynthesis; S-adenosylmethioninamine from S-adenosyl-L-methionine: step 1/1. In Solanum tuberosum (Potato), this protein is S-adenosylmethionine decarboxylase proenzyme (SAMDC).